The sequence spans 258 residues: Tryptophan synthase alpha chain (258 aa).

Catalysis depends on proton acceptor residues Glu52 and Asp63.

Belongs to the TrpA family. As to quaternary structure, tetramer of two alpha and two beta chains.

The catalysed reaction is (1S,2R)-1-C-(indol-3-yl)glycerol 3-phosphate + L-serine = D-glyceraldehyde 3-phosphate + L-tryptophan + H2O. The protein operates within amino-acid biosynthesis; L-tryptophan biosynthesis; L-tryptophan from chorismate: step 5/5. In terms of biological role, the alpha subunit is responsible for the aldol cleavage of indoleglycerol phosphate to indole and glyceraldehyde 3-phosphate. This is Tryptophan synthase alpha chain from Streptococcus pneumoniae serotype 2 (strain D39 / NCTC 7466).